The following is a 641-amino-acid chain: Chaperone protein DnaK (641 aa).

T198 is modified (phosphothreonine; by autocatalysis). Basic and acidic residues-rich tracts occupy residues 514 to 529 (AEAN…EGVE), 540 to 554 (SSEK…KVSE), and 608 to 621 (AHAD…RSGD). 2 disordered regions span residues 514–554 (AEAN…KVSE) and 604–641 (QTES…KRSA). Residues 622 to 633 (DVVDADYEEVKD) are compositionally biased toward acidic residues.

This sequence belongs to the heat shock protein 70 family.

Its function is as follows. Acts as a chaperone. This Sinorhizobium medicae (strain WSM419) (Ensifer medicae) protein is Chaperone protein DnaK.